Here is a 260-residue protein sequence, read N- to C-terminus: 3-dehydroquinate dehydratase (260 aa).

3-dehydroquinate-binding positions include 50–52 (EWR) and Arg-86. Residue His-148 is the Proton donor/acceptor of the active site. Catalysis depends on Lys-175, which acts as the Schiff-base intermediate with substrate. Residues Arg-217, Ser-236, and Gln-240 each coordinate 3-dehydroquinate.

This sequence belongs to the type-I 3-dehydroquinase family. As to quaternary structure, homodimer.

It carries out the reaction 3-dehydroquinate = 3-dehydroshikimate + H2O. Its pathway is metabolic intermediate biosynthesis; chorismate biosynthesis; chorismate from D-erythrose 4-phosphate and phosphoenolpyruvate: step 3/7. Functionally, involved in the third step of the chorismate pathway, which leads to the biosynthesis of aromatic amino acids. Catalyzes the cis-dehydration of 3-dehydroquinate (DHQ) and introduces the first double bond of the aromatic ring to yield 3-dehydroshikimate. The sequence is that of 3-dehydroquinate dehydratase from Aromatoleum aromaticum (strain DSM 19018 / LMG 30748 / EbN1) (Azoarcus sp. (strain EbN1)).